A 346-amino-acid polypeptide reads, in one-letter code: MQKSILLTKPDGTQSNLHSIKTETPTTVEFDSEQMERGHRERGRSKKKRGERDSNVSSLSRSRSRASSRSRVREEEFLKWTVLRQDPSMRLRVVDVDSEEEGEGNDEDDDDGDGDDMDEEESDEEQVSDIENDLEIDEEFHYDLGMKVLPNFCTSINEVLDSSKPWIAKYEISIRGHENEDVSLEQLDGGYVRAMQLLTKGAGAEAGNQRSFILYTDLSSESTYALTYLMGAAVNQGDTVYIVHWEPSKPTDDSQMFANVARIRKHVMHLFDCVAGVLDDLDVVVLSLTHPYPKHLLNEMIHGLKPVALCCSLSVILSTLQNFVCSVPILAVRKKLKRAKRKGISE.

Residues 1–29 are compositionally biased toward polar residues; the sequence is MQKSILLTKPDGTQSNLHSIKTETPTTVE. 2 disordered regions span residues 1 to 74 and 91 to 132; these read MQKS…RVRE and LRVV…DIEN. Residue threonine 24 is modified to Phosphothreonine. Positions 40 to 49 are enriched in basic residues; the sequence is RERGRSKKKR. The segment covering 96–132 has biased composition (acidic residues); that stretch reads VDSEEEGEGNDEDDDDGDGDDMDEEESDEEQVSDIEN.

Its function is as follows. Controls the nucleo-mitochondrial dependence of galactose, maltose and raffinose utilization. Becomes essential in the absence of functioning mitochondria. This Saccharomyces cerevisiae (strain ATCC 204508 / S288c) (Baker's yeast) protein is Sugar utilization regulatory protein IMP2 (IMP2').